Here is a 1194-residue protein sequence, read N- to C-terminus: MKCFFPVLSCLAVLGVVSAQRQVTVQEGPLYRTESSHITIWCNVSGYQGPSEQNFQWSIYLPSAPEREVQIVSTVDSSFPYAIYTQRVRGGKIYVERIQGNSALLHITDLQARDAGEYECHTPNTDERYFGSYSAKMNLVVIPDSLQTTAVPQTLHKVEQDPLELSCEVATETVQHTHLSVSWLRQKGGENPVEVISLSRDFILHSSSEYAQRQSLGEVRLDKLGRSTFRLTIFHLQPSDQGEFYCEAAEWIQDPDGSWYAMTRKRSEGAVVNVQPTDKEFTVRLETDKRLHTVGEPVEFRCILEAQNIPDRYFAVSWAFNSSLIATMGPNAVPVLNSDFAHREAKGQLKVAKESDGVFVLKIYHLRQEDSGKYNCRVTEREKTVTGEFIDKESKRPKNIPIVVLPLKSSISVEVASNASVVLEGEDLHFSCTVRTVGRLQARFSVIWQLVDRQNRRSNVMWLDRDGTLQPGSAYWERSSYGGIQMEQVQPNSFSLGIFNSRKEDEGQYECHVTEWVRAVDGEWQIVGERRASTLVSITALETGFAVTAISRTPGVTYSDSFDLQCIIKPHYPARVPVSVTWRFQPVGTVEFHDLVTFTRDGGVQWGDKSSTFRTRTAIEKAESSNNVRLSISRASDTEAGKYQCVAELWRRNYNNTWTRLAERTSNLLEIRVLQPVTKLQVSKSKRTLTLVENRAIQLNCSVKSQTSPNSHFAVLWYVHKPSDADGKLILKTTHSSAFEYGTYAEEEGLRGRLQFERHVSGGLFSLTVQRAEVSDSGSYYCHVEEWLLSPNYAWYKLAEEVSGRTEVTVKQPDSRLKLSQVQGSLSVLETRQIQLECVVLNRTSVASQLLVEWFVWKPNHPEREVVAHLSRDATFHYGEQAAKNNLKGRLHAESPSSGVYRLFIQNVAVQDSGTYSCRVEEWLPSPSGVWYKRAEDTAGQTAVTVMRPDAALQVDTVVPNATVTEKAAFQLDCSILSRSSQDSRFAVAWYSLRTKGGGKRGSLGIDEQEEEEEEEDISQEEDSEDPTERTVLLSVGPDAVFGPEGSPWEGRLRFQRLSPLLYRLTVLEASPQDTGNYSCHVEEWLPSPQKEWYRLTEEESAPIGIRVLDTSSTLQSLICSNDALFYFVFFYPFPIFGILIITILLVRFKSRNSSKNSEGKNGVPLLWIKEPHLNYSPTCLEPPVLSIHPGAID.

Residues 1–19 (MKCFFPVLSCLAVLGVVSA) form the signal peptide. 8 consecutive Ig-like C2-type domains span residues 20 to 138 (QRQV…AKMN), 143 to 262 (PDSL…WYAM), 276 to 386 (PTDK…KTVT), 401 to 539 (PIVV…VSIT), 545 to 661 (FAVT…WTRL), 676 to 803 (PVTK…EEVS), 813 to 945 (PDSR…TAVT), and 949 to 1097 (PDAA…YRLT). Residues 20-1124 (QRQVTVQEGP…LQSLICSNDA (1105 aa)) are Extracellular-facing. Cystine bridges form between cysteine 42/cysteine 120 and cysteine 167/cysteine 246. Asparagine 43 is a glycosylation site (N-linked (GlcNAc...) asparagine). The EWI motif signature appears at 250–252 (EWI). Cysteine 302 and cysteine 376 form a disulfide bridge. N-linked (GlcNAc...) asparagine glycosylation is present at asparagine 418. 5 cysteine pairs are disulfide-bonded: cysteine 432–cysteine 511, cysteine 566–cysteine 645, cysteine 701–cysteine 782, cysteine 838–cysteine 918, and cysteine 974–cysteine 1080. N-linked (GlcNAc...) asparagine glycosylation occurs at asparagine 842. The disordered stretch occupies residues 997-1030 (GGGKRGSLGIDEQEEEEEEEDISQEEDSEDPTER). Residues 1007–1026 (DEQEEEEEEEDISQEEDSED) are compositionally biased toward acidic residues. Asparagine 1077 is a glycosylation site (N-linked (GlcNAc...) asparagine). Residues 1125–1145 (LFYFVFFYPFPIFGILIITIL) traverse the membrane as a helical segment. Topologically, residues 1146–1194 (LVRFKSRNSSKNSEGKNGVPLLWIKEPHLNYSPTCLEPPVLSIHPGAID) are cytoplasmic.

As to expression, expressed in the lacrimal duct and lacrimal gland.

It is found in the membrane. This is Immunoglobulin superfamily member 3 (Igsf3) from Mus musculus (Mouse).